The following is a 719-amino-acid chain: 2'-5'-oligoadenylate synthase 2 (719 aa).

Gly-2 carries N-myristoyl glycine lipidation. OAS domain regions lie at residues Val-11–Val-335 and Thr-343–Pro-683. Lys-378 carries the post-translational modification N6-acetyllysine. Residue Ser-396 coordinates ATP. 3 residues coordinate Mg(2+): Asp-408, Asp-410, and Asp-481. Arg-544 and Lys-547 together coordinate ATP.

Belongs to the 2-5A synthase family. Homodimer. It depends on Mg(2+) as a cofactor. Post-translationally, myristoylation is not essential for its activity. In terms of processing, glycosylated. Glycosylation is essential for its activity.

It localises to the cytoplasm. The protein localises to the perinuclear region. It catalyses the reaction 3 ATP = 5'-triphosphoadenylyl-(2'-&gt;5')-adenylyl-(2'-&gt;5')-adenosine + 2 diphosphate. Its activity is regulated as follows. Produced as a latent enzyme which is activated by double stranded RNA (dsRNA) generated during the course of viral infection. The dsRNA activator must be at least 15 nucleotides long, and no modification of the 2'-hydroxyl group is tolerated. ssRNA or dsDNA do not act as activators. Strongly inhibited by copper, iron and zinc ions. Partially inhibited by cobalt and nickel ions. Functionally, interferon-induced, dsRNA-activated antiviral enzyme which plays a critical role in cellular innate antiviral response. Activated by detection of double stranded RNA (dsRNA): polymerizes higher oligomers of 2'-5'-oligoadenylates (2-5A) from ATP which then bind to the inactive monomeric form of ribonuclease L (RNASEL) leading to its dimerization and subsequent activation. Activation of RNASEL leads to degradation of cellular as well as viral RNA, resulting in the inhibition of protein synthesis, thus terminating viral replication. Can mediate the antiviral effect via the classical RNASEL-dependent pathway or an alternative antiviral pathway independent of RNASEL. In addition, it may also play a role in other cellular processes such as apoptosis, cell growth, differentiation and gene regulation. May act as a negative regulator of lactation, stopping lactation in virally infected mammary gland lobules, thereby preventing transmission of viruses to neonates. Non-infected lobules would not be affected, allowing efficient pup feeding during infection. The protein is 2'-5'-oligoadenylate synthase 2 of Homo sapiens (Human).